A 405-amino-acid chain; its full sequence is FAD-dependent monooxygenase thnD (405 aa).

FAD is bound by residues Glu-30, Ala-45, Arg-106, Asp-308, and Gly-321.

Belongs to the paxM FAD-dependent monooxygenase family. Requires FAD as cofactor.

Functionally, FAD-dependent monooxygenase; part of the gene cluster that produces the tetronate natural products trihazones. Transcription analysis of thnD confirmed this gene is expressed, hence its role in the biosynthetic pathway remains cryptic. The pathway begins with the formation of trihazone A by the hybrid PKS-NRPS synthetase thnA and the trans-enoyl reductase thnE. Trihazone A is further decarboxylated by the 2-oxoglutarate-dependent dioxygenase thnC to produce trihazone D. The function of the FAD-dependent monooxygenase thnD has still to be identified. The polypeptide is FAD-dependent monooxygenase thnD (Trichoderma harzianum (Hypocrea lixii)).